The following is a 221-amino-acid chain: Probable hydrogenase maturation factor HypB (221 aa).

The tract at residues 35–196 is G-domain; sequence AFDFMGAIGS…KRINPDAEVV (162 aa). Ni(2+) contacts are provided by C95 and H96. Residues C95, H96, H100, H104, and C127 each contribute to the Zn(2+) site. C127 provides a ligand contact to Ni(2+).

It belongs to the SIMIBI class G3E GTPase family. HypB/HupM subfamily. Homodimer.

Involved in the maturation of [NiFe] hydrogenases. Required for nickel insertion into the metal center of the hydrogenase. Exhibits a low intrinsic GTPase activity, which is essential for nickel insertion. In Methanocaldococcus jannaschii (strain ATCC 43067 / DSM 2661 / JAL-1 / JCM 10045 / NBRC 100440) (Methanococcus jannaschii), this protein is Probable hydrogenase maturation factor HypB.